We begin with the raw amino-acid sequence, 244 residues long: uncharacterized protein (244 aa).

The next 4 helical transmembrane spans lie at 20-42 (TITA…VVLI), 49-67 (FVYI…ATKV), 82-101 (TPSI…ASVF), and 108-125 (AFLV…ATPI).

Its subcellular location is the cell membrane. This is an uncharacterized protein from Archaeoglobus fulgidus (strain ATCC 49558 / DSM 4304 / JCM 9628 / NBRC 100126 / VC-16).